The sequence spans 199 residues: Small ribosomal subunit protein uS5 (199 aa).

Residues 1–28 (MARTPNTDRRQRGGDDQRNRSPRSDERD) form a disordered region. The S5 DRBM domain maps to 31 to 94 (FLDKLVHINR…DQAKRTMIKV (64 aa)).

The protein belongs to the universal ribosomal protein uS5 family. As to quaternary structure, part of the 30S ribosomal subunit. Contacts proteins S4 and S8.

In terms of biological role, with S4 and S12 plays an important role in translational accuracy. Located at the back of the 30S subunit body where it stabilizes the conformation of the head with respect to the body. The protein is Small ribosomal subunit protein uS5 of Rhodospirillum rubrum (strain ATCC 11170 / ATH 1.1.1 / DSM 467 / LMG 4362 / NCIMB 8255 / S1).